The following is a 553-amino-acid chain: Adenine deaminase 1 (553 aa).

This sequence belongs to the metallo-dependent hydrolases superfamily. Adenine deaminase family. Requires Mn(2+) as cofactor.

It carries out the reaction adenine + H2O + H(+) = hypoxanthine + NH4(+). The chain is Adenine deaminase 1 from Oenococcus oeni (strain ATCC BAA-331 / PSU-1).